Reading from the N-terminus, the 723-residue chain is Hypoxia-inducible factor prolyl hydroxylase (723 aa).

The Zn(2+) site is built by Cys-39, Cys-42, Cys-54, Cys-57, Cys-63, His-67, His-75, and Cys-79. Residues 39–79 form an MYND-type; atypical zinc finger; sequence CTYCGSSCTSSQLQTCLFCGTVAYCSKEHQQLDWLTHKMIC. Over residues 249–270 the composition is skewed to low complexity; it reads PSTASTATIPPPATTTSSATSS. Disordered regions lie at residues 249-275 and 294-323; these read PSTA…KSET and IETE…KINY. A Fe2OG dioxygenase domain is found at 468 to 566; sequence GRSRAMLAIY…RFAITIWYMD (99 aa). Fe cation contacts are provided by His-487, Asp-489, and His-548. A 2-oxoglutarate-binding site is contributed by Arg-557. The interval 678–723 is disordered; the sequence is RTTSLQSISDHFRSERSHERRSSTSSDQDLDEGLPPPPSTNPEYYI. The span at 687-699 shows a compositional bias: basic and acidic residues; that stretch reads DHFRSERSHERRS.

In terms of assembly, interacts (via catalytic domain) with lin-10 (via N-terminus); the interaction regulates lin-10 subcellular localization; the interaction is direct. Interacts (via catalytic domain) with swan-1 (via WD 1-3 repeats); the interaction may regulate vhl-1-independent hif-1 transcriptional activity; the interaction is direct. Interacts (via C-terminus) with cysl-1; the interaction is enhanced by hydrogen disulfide and activates hif-1-mediated transcription; the interaction is direct. Fe(2+) is required as a cofactor. Requires L-ascorbate as cofactor. In terms of tissue distribution, in larvae and adults, expressed in pharyngeal and body wall muscles.

It localises to the cytoplasm. The protein localises to the nucleus. The protein resides in the cell projection. Its subcellular location is the dendrite. It is found in the axon. It catalyses the reaction L-prolyl-[hypoxia-inducible factor alpha subunit] + 2-oxoglutarate + O2 = trans-4-hydroxy-L-prolyl-[hypoxia-inducible factor alpha subunit] + succinate + CO2. With respect to regulation, inhibited by Co(2+) and dimethyloxalylglycine. Inhibited by the iron chelator 2, 2'-dipyridyl. Its function is as follows. Cellular oxygen sensor which regulates the stability and the activity of hypoxia-inducible transcription factor, hif-1. In normoxic conditions, hydroxylates hif-1 targeting it for vhl-1-mediated proteasomal degradation. In addition, regulates hif-1 transcriptional activity in a vhl-1-independent manner and independently of its hydroxylase activity. By regulating hif-1 activity, controls several cellular responses. Mediates susceptibility to B.thuringiensis and V.cholerae pore-forming toxins and enteropathogenic E.coli. Mediates susceptibility to P.aeruginosa PAO1-mediated killing by regulating resistance to cyanide produced by P.aeruginosa. Mediates resistance to S.aureus-mediated killing. In addition, plays a role in heat acclimation, neuronal development, behavioral responses to reoxygenation and hydrogen sulfide, iron homeostasis and aging. In neurons, involved in mitochondrion fusion during reoxygenation. Involved in egg laying. In terms of biological role, regulates the trafficking of the glutamate receptor glr-1, probably independently of hif-1, by regulating lin-10 subcellular localization in response to oxygen levels. May hydroxylate lin-10. The protein is Hypoxia-inducible factor prolyl hydroxylase of Caenorhabditis elegans.